We begin with the raw amino-acid sequence, 614 residues long: Dihydroxy-acid dehydratase (614 aa).

Aspartate 81 provides a ligand contact to Mg(2+). Cysteine 122 lines the [2Fe-2S] cluster pocket. Mg(2+)-binding residues include aspartate 123 and lysine 124. Lysine 124 is modified (N6-carboxylysine). Cysteine 195 provides a ligand contact to [2Fe-2S] cluster. Glutamate 491 is a binding site for Mg(2+). The active-site Proton acceptor is serine 517.

This sequence belongs to the IlvD/Edd family. In terms of assembly, homodimer. The cofactor is [2Fe-2S] cluster. It depends on Mg(2+) as a cofactor.

The catalysed reaction is (2R)-2,3-dihydroxy-3-methylbutanoate = 3-methyl-2-oxobutanoate + H2O. The enzyme catalyses (2R,3R)-2,3-dihydroxy-3-methylpentanoate = (S)-3-methyl-2-oxopentanoate + H2O. It participates in amino-acid biosynthesis; L-isoleucine biosynthesis; L-isoleucine from 2-oxobutanoate: step 3/4. Its pathway is amino-acid biosynthesis; L-valine biosynthesis; L-valine from pyruvate: step 3/4. Functions in the biosynthesis of branched-chain amino acids. Catalyzes the dehydration of (2R,3R)-2,3-dihydroxy-3-methylpentanoate (2,3-dihydroxy-3-methylvalerate) into 2-oxo-3-methylpentanoate (2-oxo-3-methylvalerate) and of (2R)-2,3-dihydroxy-3-methylbutanoate (2,3-dihydroxyisovalerate) into 2-oxo-3-methylbutanoate (2-oxoisovalerate), the penultimate precursor to L-isoleucine and L-valine, respectively. The protein is Dihydroxy-acid dehydratase of Nitrobacter winogradskyi (strain ATCC 25391 / DSM 10237 / CIP 104748 / NCIMB 11846 / Nb-255).